Consider the following 217-residue polypeptide: Growth factor receptor-bound protein 2 (217 aa).

Position 1 is an N-acetylmethionine (Met1). An SH3 1 domain is found at 1 to 58; it reads MEAIAKYDFKATADDELSFKRGDILKVLNEECDQNWYKAELNGKDGFIPKNYIEMKPH. An N6-acetyllysine mark is found at Lys6, Lys50, and Lys109. The region spanning 60 to 152 is the SH2 domain; it reads WFFGKIPRAK…NQQIFLRDIE (93 aa). Residue Lys109 forms a Glycyl lysine isopeptide (Lys-Gly) (interchain with G-Cter in ubiquitin) linkage. Positions 156–215 constitute an SH3 2 domain; it reads QQPTYVQALFDFDPQEDGELGFRRGDFIHVMDNSDPNWWKGACHGQTGMFPRNYVTPVNR. Tyr209 carries the post-translational modification Phosphotyrosine. Thr211 is subject to Phosphothreonine.

It belongs to the GRB2/sem-5/DRK family. As to quaternary structure, homodimer. Associates (via SH2 domain) with activated EGF and PDGF receptors (tyrosine phosphorylated). Interacts with PDGFRA (tyrosine phosphorylated); the interaction may be indirect. Also associates to other cellular Tyr-phosphorylated proteins such as SIT1, IRS1, IRS2, IRS4, SHC and LNK; probably via the concerted action of both its SH2 and SH3 domains. It also seems to interact with RAS in the signaling pathway leading to DNA synthesis. Interacts with SOS1. Forms a complex with MUC1 and SOS1, through interaction of the SH3 domains with SOS1 and the SH2 domain with phosphorylated MUC1. Interacts with phosphorylated MET. Interacts with phosphorylated TOM1L1. Interacts with the phosphorylated C-terminus of SH2B2. Interacts with phosphorylated SIT1, LAX1, LAT, LAT2 and LIME1 upon TCR and/or BCR activation. Interacts with NISCH, PTPNS1 and REPS2. Interacts with syntrophin SNTA1. Interacts (via SH3 domains) with REPS1. Interacts (via SH3 domains) with PIK3C2B. Interacts with CBL and CBLB. Interacts with AJUBA and CLNK. Interacts (via SH2 domain) with TEK/TIE2 (tyrosine phosphorylated). Interacts with SHB, INPP5D/SHIP1, SKAP1 and SKAP2. Interacts with PTPN11. Interacts with PRNP. Interacts with RALGPS1. Interacts with HCST. Interacts with KDR. Interacts with FLT1 (tyrosine-phosphorylated). Interacts with GAPT and PTPRE. Interacts (via SH2 domain) with KIF26A. Interacts (via SH3 2) with GAB2. Interacts with ADAM15. Interacts with THEMIS2. Interacts (via SH2 domain) with AXL (phosphorylated). Interacts (via SH2 domain) with KIT (phosphorylated). Interacts with PTPRJ and BCR. Interacts with PTPN23. Interacts with FLT4 (tyrosine phosphorylated). Interacts with EPHB1 and SHC1; activates the MAPK/ERK cascade to regulate cell migration. Part of a complex including TNK2, GRB2, LTK and one receptor tyrosine kinase (RTK) such as AXL and PDGFRL, in which GRB2 promotes RTK recruitment by TNK2. Interacts (via SH2 domain) with CSF1R (tyrosine phosphorylated). Interacts with ERBB4. Interacts with NTRK1 (phosphorylated upon ligand-binding). Interacts with PTK2/FAK1 (tyrosine phosphorylated). Interacts with PTK2B/PYK2 (tyrosine phosphorylated). Interacts (via SH3 domains) with GAREM1 isoform 1 (via proline-rich domain and tyrosine phosphorylated); the interaction occurs upon EGF stimulation. Interacts with DAB2. Interacts with TESPA1. Interacts with PLCG1, LAT and THEMIS upon TCR activation in thymocytes; the association is weaker in the absence of TESPA1. Interacts with CD28. Interacts with RAB13; may recruit RAB13 to the leading edge of migrating endothelial cells where it can activate RHOA. Interacts with ASAP3 (phosphorylated form). Interacts (via SH2 domain) with PTPRH (phosphorylated form). Interacts with PTPRO (phosphorylated form). Interacts with PTPRB (phosphorylated form). Interacts (via SH3 domain 2) with PRR14 (via proline-rich region). Interacts with FCRL6 (tyrosine phosphorylated form). Interacts with RHEX (via tyrosine-phosphorylated form). Interacts with DENND2B. Interacts with SPRY2. Interacts with LRRC8A. Interacts with PEAK1. Interacts with CD28. Interacts with FCRL1. Interacts with PCNA. Interacts with CD19. Interacts with BECN1. Interacts with RAD51; the interaction inhibits RAD51 ATPase to stabilize RAD51-DNA complex at stalled replication forks. Interacts with MRE11; this interaction recruits MRE11 to the DNA damage sites. Interacts with RIPK1 ans SQSTM1; these interactions play a critical role in regulating programmed necrosis. Interacts with AGO2; this interaction is important for the formation of a ternary complex containing GRB2, AGO2 and DICER1. Interacts with TIGIT; this interaction inhibits PI3K and MAPK signaling cascades. Interacts with CD226; this interaction leads to activation of VAV1, PI3K and PLCG1. Interacts (via SH2-domain) with SCIMP; this interaction is dependent on phosphorylation of SCIMP 'Tyr-69'. In terms of assembly, interacts with SOS1; this interaction competes with GRB2 to bind SOS1 via its N-terminal SH3 domain. As to quaternary structure, (Microbial infection) Interacts (via SH3 domain) with hepatitis E virus/HEV ORF3 protein. (Microbial infection) Interacts with hepatitis C virus/HCV protein NS5A via its SH3 domains. In terms of assembly, (Microbial infection) Interacts with herpes simplex virus 1 protein UL46. As to quaternary structure, (Microbial infection) Interacts with B19 parvovirus protein 11K. In terms of processing, phosphorylation of Tyr-209 in the C-terminal SH3 domain reduces its binding to SOS1. Ubiquitinated by RNF173, leading to proteasomal degradation and inhibition of the RAF/MEK/ERK pathway. In the nucleus, polyubiquitinated by RBBP6 at Lys-109 at DNA damage sites.

It is found in the nucleus. The protein resides in the cytoplasm. Its subcellular location is the endosome. It localises to the golgi apparatus. Functionally, non-enzymatic adapter protein that plays a pivotal role in precisely regulated signaling cascades from cell surface receptors to cellular responses, including signaling transduction and gene expression. Thus, participates in many biological processes including regulation of innate and adaptive immunity, autophagy, DNA repair or necroptosis. Controls signaling complexes at the T-cell antigen receptor to facilitate the activation, differentiation, and function of T-cells. Mechanistically, engagement of the TCR leads to phosphorylation of the adapter protein LAT, which serves as docking site for GRB2. In turn, GRB2 establishes a a connection with SOS1 that acts as a guanine nucleotide exchange factor and serves as a critical regulator of KRAS/RAF1 leading to MAPKs translocation to the nucleus and activation. Functions also a role in B-cell activation by amplifying Ca(2+) mobilization and activation of the ERK MAP kinase pathway upon recruitment to the phosphorylated B-cell antigen receptor (BCR). Plays a role in switching between autophagy and programmed necrosis upstream of EGFR by interacting with components of necrosomes including RIPK1 and with autophagy regulators SQSTM1 and BECN1. Regulates miRNA biogenesis by forming a functional ternary complex with AGO2 and DICER1. Functions in the replication stress response by protecting DNA at stalled replication forks from MRE11-mediated degradation. Mechanistically, inhibits RAD51 ATPase activity to stabilize RAD51 on stalled replication forks. Additionally, directly recruits and later releases MRE11 at DNA damage sites during the homology-directed repair (HDR) process. In terms of biological role, does not bind to phosphorylated epidermal growth factor receptor (EGFR) but inhibits EGF-induced transactivation of a RAS-responsive element. Acts as a dominant negative protein over GRB2 and by suppressing proliferative signals, may trigger active programmed cell death. Mechanistically, inhibits RAS-ERK signaling and downstream cell proliferation by competing with GRB2 for SOS1 binding and thus by regulating SOS1 membrane recruitment. This chain is Growth factor receptor-bound protein 2 (GRB2), found in Homo sapiens (Human).